A 356-amino-acid polypeptide reads, in one-letter code: 1,2-phenylacetyl-CoA epoxidase, subunit E (356 aa).

The 105-residue stretch at 2–106 folds into the FAD-binding FR-type domain; sequence TTFHSLTVAK…MVPQGHFGYQ (105 aa). The interval 112 to 228 is oxidoreductase; that stretch reads QGRYLAIAAG…AAMMDDAETA (117 aa). Positions 262–354 constitute a 2Fe-2S ferredoxin-type domain; it reads QKVTVRQDGR…DVVVDFDAKG (93 aa). Residues cysteine 299, cysteine 304, cysteine 307, and cysteine 337 each contribute to the [2Fe-2S] cluster site.

This sequence in the N-terminal section; belongs to the FAD-binding oxidoreductase type 6 family. It depends on [2Fe-2S] cluster as a cofactor. FAD serves as cofactor.

It participates in aromatic compound metabolism; phenylacetate degradation. In terms of biological role, component of 1,2-phenylacetyl-CoA epoxidase multicomponent enzyme system which catalyzes the reduction of phenylacetyl-CoA (PA-CoA) to form 1,2-epoxyphenylacetyl-CoA. The subunit E is a reductase with a preference for NADPH and FAD, capable of reducing cytochrome c. The polypeptide is 1,2-phenylacetyl-CoA epoxidase, subunit E (paaE) (Escherichia coli (strain K12)).